The sequence spans 173 residues: Crossover junction endodeoxyribonuclease RuvC (173 aa).

Catalysis depends on residues Asp8, Glu67, and Asp139. Mg(2+)-binding residues include Asp8, Glu67, and Asp139.

Belongs to the RuvC family. As to quaternary structure, homodimer which binds Holliday junction (HJ) DNA. The HJ becomes 2-fold symmetrical on binding to RuvC with unstacked arms; it has a different conformation from HJ DNA in complex with RuvA. In the full resolvosome a probable DNA-RuvA(4)-RuvB(12)-RuvC(2) complex forms which resolves the HJ. Mg(2+) is required as a cofactor.

It is found in the cytoplasm. It carries out the reaction Endonucleolytic cleavage at a junction such as a reciprocal single-stranded crossover between two homologous DNA duplexes (Holliday junction).. Its function is as follows. The RuvA-RuvB-RuvC complex processes Holliday junction (HJ) DNA during genetic recombination and DNA repair. Endonuclease that resolves HJ intermediates. Cleaves cruciform DNA by making single-stranded nicks across the HJ at symmetrical positions within the homologous arms, yielding a 5'-phosphate and a 3'-hydroxyl group; requires a central core of homology in the junction. The consensus cleavage sequence is 5'-(A/T)TT(C/G)-3'. Cleavage occurs on the 3'-side of the TT dinucleotide at the point of strand exchange. HJ branch migration catalyzed by RuvA-RuvB allows RuvC to scan DNA until it finds its consensus sequence, where it cleaves and resolves the cruciform DNA. The sequence is that of Crossover junction endodeoxyribonuclease RuvC from Pectobacterium carotovorum subsp. carotovorum (strain PC1).